The sequence spans 279 residues: Acetyl-coenzyme A carboxylase carboxyl transferase subunit beta (279 aa).

Positions 23 to 279 (LWWKCEECGA…IVRLAGMLKV (257 aa)) constitute a CoA carboxyltransferase N-terminal domain. Residues C27, C30, C46, and C49 each coordinate Zn(2+). The segment at 27–49 (CEECGAMIHKKQLEDHVYTCSDC) adopts a C4-type zinc-finger fold.

The protein belongs to the AccD/PCCB family. In terms of assembly, acetyl-CoA carboxylase is a heterohexamer composed of biotin carboxyl carrier protein (AccB), biotin carboxylase (AccC) and two subunits each of ACCase subunit alpha (AccA) and ACCase subunit beta (AccD). It depends on Zn(2+) as a cofactor.

It is found in the cytoplasm. The catalysed reaction is N(6)-carboxybiotinyl-L-lysyl-[protein] + acetyl-CoA = N(6)-biotinyl-L-lysyl-[protein] + malonyl-CoA. It functions in the pathway lipid metabolism; malonyl-CoA biosynthesis; malonyl-CoA from acetyl-CoA: step 1/1. In terms of biological role, component of the acetyl coenzyme A carboxylase (ACC) complex. Biotin carboxylase (BC) catalyzes the carboxylation of biotin on its carrier protein (BCCP) and then the CO(2) group is transferred by the transcarboxylase to acetyl-CoA to form malonyl-CoA. This chain is Acetyl-coenzyme A carboxylase carboxyl transferase subunit beta, found in Chlorobium limicola (strain DSM 245 / NBRC 103803 / 6330).